Reading from the N-terminus, the 253-residue chain is uncharacterized protein (253 aa).

Ser145 lines the substrate pocket. Catalysis depends on Tyr159, which acts as the Proton acceptor.

This sequence belongs to the short-chain dehydrogenases/reductases (SDR) family.

This is an uncharacterized protein from Mycobacterium tuberculosis (strain CDC 1551 / Oshkosh).